Here is a 221-residue protein sequence, read N- to C-terminus: Translation initiation factor 6 (221 aa).

Belongs to the eIF-6 family.

Its function is as follows. Binds to the 50S ribosomal subunit and prevents its association with the 30S ribosomal subunit to form the 70S initiation complex. The sequence is that of Translation initiation factor 6 from Halorubrum lacusprofundi (strain ATCC 49239 / DSM 5036 / JCM 8891 / ACAM 34).